The following is a 378-amino-acid chain: MDPGKPRKNVLVVALLVIFQVCFCQDEVTDDYIGENTTVDYTLYESVCFKKDVRNFKAWFLPLMYSVICFVGLLGNGLVILTYIYFKRLKTMTDTYLLNLAVADILFLLILPFWAYSEAKSWIFGVYLCKGIFGIYKLSFFSGMLLLLCISIDRYVAIVQAVSAHRHRARVLLISKLSCVGIWMLALFLSIPELLYSGLQKNSGEDTLRCSLVSAQVEALITIQVAQMVFGFLVPMLAMSFCYLIIIRTLLQARNFERNKAIKVIIAVVVVFIVFQLPYNGVVLAQTVANFNITNSSCETSKQLNIAYDVTYSLASVRCCVNPFLYAFIGVKFRSDLFKLFKDLGCLSQERLRHWSSCRHVRNASVSMEAETTTTFSP.

Positions 1–24 (MDPGKPRKNVLVVALLVIFQVCFC) are cleaved as a signal peptide. Residues 25 to 59 (QDEVTDDYIGENTTVDYTLYESVCFKKDVRNFKAW) are Extracellular-facing. The N-linked (GlcNAc...) asparagine glycan is linked to N36. The helical transmembrane segment at 60 to 86 (FLPLMYSVICFVGLLGNGLVILTYIYF) threads the bilayer. Residues 87-95 (KRLKTMTDT) lie on the Cytoplasmic side of the membrane. Residues 96–116 (YLLNLAVADILFLLILPFWAY) traverse the membrane as a helical segment. Residues 117 to 130 (SEAKSWIFGVYLCK) lie on the Extracellular side of the membrane. A disulfide bridge links C129 with C210. Residues 131–152 (GIFGIYKLSFFSGMLLLLCISI) form a helical membrane-spanning segment. Residues 153–170 (DRYVAIVQAVSAHRHRAR) lie on the Cytoplasmic side of the membrane. Residues 171-191 (VLLISKLSCVGIWMLALFLSI) form a helical membrane-spanning segment. Over 192-219 (PELLYSGLQKNSGEDTLRCSLVSAQVEA) the chain is Extracellular. The chain crosses the membrane as a helical span at residues 220-247 (LITIQVAQMVFGFLVPMLAMSFCYLIII). Over 248–263 (RTLLQARNFERNKAIK) the chain is Cytoplasmic. A helical membrane pass occupies residues 264–289 (VIIAVVVVFIVFQLPYNGVVLAQTVA). Over 290–313 (NFNITNSSCETSKQLNIAYDVTYS) the chain is Extracellular. Residues 314–331 (LASVRCCVNPFLYAFIGV) traverse the membrane as a helical segment. The Cytoplasmic segment spans residues 332-378 (KFRSDLFKLFKDLGCLSQERLRHWSSCRHVRNASVSMEAETTTTFSP).

The protein belongs to the G-protein coupled receptor 1 family.

It is found in the cell membrane. Its function is as follows. Receptor for the MIP-3-beta chemokine. This Mus musculus (Mouse) protein is C-C chemokine receptor type 7 (Ccr7).